A 401-amino-acid polypeptide reads, in one-letter code: Acetate kinase (401 aa).

Residue N7 participates in Mg(2+) binding. K14 serves as a coordination point for ATP. A substrate-binding site is contributed by R90. The Proton donor/acceptor role is filled by D147. ATP contacts are provided by residues 207 to 211 (HMGNG), 282 to 284 (DMR), and 331 to 335 (GIGEN). E385 contacts Mg(2+).

This sequence belongs to the acetokinase family. In terms of assembly, homodimer. Requires Mg(2+) as cofactor. Mn(2+) is required as a cofactor.

It is found in the cytoplasm. The enzyme catalyses acetate + ATP = acetyl phosphate + ADP. Its pathway is metabolic intermediate biosynthesis; acetyl-CoA biosynthesis; acetyl-CoA from acetate: step 1/2. Functionally, catalyzes the formation of acetyl phosphate from acetate and ATP. Can also catalyze the reverse reaction. This Clostridium acetobutylicum (strain ATCC 824 / DSM 792 / JCM 1419 / IAM 19013 / LMG 5710 / NBRC 13948 / NRRL B-527 / VKM B-1787 / 2291 / W) protein is Acetate kinase.